Reading from the N-terminus, the 177-residue chain is Adenine phosphoribosyltransferase (177 aa).

Belongs to the purine/pyrimidine phosphoribosyltransferase family. In terms of assembly, homodimer.

It is found in the cytoplasm. The catalysed reaction is AMP + diphosphate = 5-phospho-alpha-D-ribose 1-diphosphate + adenine. The protein operates within purine metabolism; AMP biosynthesis via salvage pathway; AMP from adenine: step 1/1. Functionally, catalyzes a salvage reaction resulting in the formation of AMP, that is energically less costly than de novo synthesis. The polypeptide is Adenine phosphoribosyltransferase (Leptospira borgpetersenii serovar Hardjo-bovis (strain JB197)).